Reading from the N-terminus, the 250-residue chain is MRLKTILLGFCAFHVARSKMVVNLINMIDEQTGEQRKVVPLELERFFPLDFDEILLRDTMQRNAAMEEEDYRELGKRDIEVAFQNTGVTLDDRLQSLPAISLFGRYVRDIDGMSEALADGDRHIMVFAPTNDAITAMPKKPWEYPRNIDKLEQAGASASEIHDAIQANVRRFVLTHVVSDIDLSKVGREDGSAVLTSDLHPKSMQGDILLRKDGDRYTVSSKTGRDLAVEEVHTASNGIVLVIDSSLDAE.

Residues 1–18 (MRLKTILLGFCAFHVARS) form the signal peptide. The FAS1 domain maps to 87–247 (GVTLDDRLQS…GIVLVIDSSL (161 aa)).

It is found in the vacuole. This is FAS1 domain-containing protein AER383W from Eremothecium gossypii (strain ATCC 10895 / CBS 109.51 / FGSC 9923 / NRRL Y-1056) (Yeast).